Consider the following 338-residue polypeptide: Replication factor C small subunit (338 aa).

Residue 53-60 (GPPGVGKT) participates in ATP binding.

It belongs to the activator 1 small subunits family. RfcS subfamily. In terms of assembly, heteromultimer composed of small subunits (RfcS) and large subunits (RfcL).

Its function is as follows. Part of the RFC clamp loader complex which loads the PCNA sliding clamp onto DNA. This chain is Replication factor C small subunit, found in Methanosarcina mazei (strain ATCC BAA-159 / DSM 3647 / Goe1 / Go1 / JCM 11833 / OCM 88) (Methanosarcina frisia).